Consider the following 535-residue polypeptide: CTP synthase (535 aa).

Positions 1–267 are amidoligase domain; the sequence is MTKYIFVTGG…DQIVLDHFGV (267 aa). Ser13 serves as a coordination point for CTP. Position 13 (Ser13) interacts with UTP. 14 to 19 provides a ligand contact to ATP; that stretch reads SLGKGI. Tyr54 contacts L-glutamine. Residue Asp71 participates in ATP binding. Mg(2+)-binding residues include Asp71 and Glu141. Residues 148-150, 188-193, and Lys224 contribute to the CTP site; these read DIE and KTKPTQ. UTP contacts are provided by residues 188-193 and Lys224; that span reads KTKPTQ. In terms of domain architecture, Glutamine amidotransferase type-1 spans 292 to 535; that stretch reads KIALVGKYVA…VAAASREVKD (244 aa). Gly354 is an L-glutamine binding site. Cys381 (nucleophile; for glutamine hydrolysis) is an active-site residue. Residues 382-385, Glu405, and Arg463 each bind L-glutamine; that span reads LGMQ. Catalysis depends on residues His508 and Glu510.

The protein belongs to the CTP synthase family. Homotetramer.

The enzyme catalyses UTP + L-glutamine + ATP + H2O = CTP + L-glutamate + ADP + phosphate + 2 H(+). It carries out the reaction L-glutamine + H2O = L-glutamate + NH4(+). It catalyses the reaction UTP + NH4(+) + ATP = CTP + ADP + phosphate + 2 H(+). Its pathway is pyrimidine metabolism; CTP biosynthesis via de novo pathway; CTP from UDP: step 2/2. Allosterically activated by GTP, when glutamine is the substrate; GTP has no effect on the reaction when ammonia is the substrate. The allosteric effector GTP functions by stabilizing the protein conformation that binds the tetrahedral intermediate(s) formed during glutamine hydrolysis. Inhibited by the product CTP, via allosteric rather than competitive inhibition. In terms of biological role, catalyzes the ATP-dependent amination of UTP to CTP with either L-glutamine or ammonia as the source of nitrogen. Regulates intracellular CTP levels through interactions with the four ribonucleotide triphosphates. The polypeptide is CTP synthase (Levilactobacillus brevis (strain ATCC 367 / BCRC 12310 / CIP 105137 / JCM 1170 / LMG 11437 / NCIMB 947 / NCTC 947) (Lactobacillus brevis)).